The primary structure comprises 291 residues: Meteorin (291 aa).

The N-terminal stretch at 1–21 (MLVATLLCALCCGLLAASAHA) is a signal peptide. 5 cysteine pairs are disulfide-bonded: cysteine 28-cysteine 49, cysteine 80-cysteine 116, cysteine 169-cysteine 240, cysteine 172-cysteine 264, and cysteine 182-cysteine 286.

This sequence belongs to the meteorin family. In terms of assembly, monomer. Highly expressed in brain. Expressed in undifferentiated neural progenitors and in astrocyte lineage, particularly in Bergmann glia, a subtype of radial glia, and a few discrete neuronal populations residing in the superior colliculus, the ocular motor nucleus, the raphe and pontine nuclei, and in various thalamic nuclei. Weakly expressed in heart, kidney, skeletal muscle, spleen, testis, gut and lung.

The protein localises to the secreted. Functionally, involved in both glial cell differentiation and axonal network formation during neurogenesis. Promotes astrocyte differentiation and transforms cerebellar astrocytes into radial glia. Also induces axonal extension in small and intermediate neurons of sensory ganglia by activating nearby satellite glia. In Mus musculus (Mouse), this protein is Meteorin (Metrn).